A 146-amino-acid chain; its full sequence is Meiotically up-regulated gene 96 protein (146 aa).

Residues 85-104 form a helical membrane-spanning segment; it reads LIRYSLILTCLVAILLSVLW.

It localises to the cytoplasm. Its subcellular location is the membrane. Functionally, has a role in meiosis. This Schizosaccharomyces pombe (strain 972 / ATCC 24843) (Fission yeast) protein is Meiotically up-regulated gene 96 protein (mug96).